The following is a 354-amino-acid chain: Replication factor C subunit 5 (354 aa).

Residue 40–47 (YGPSGSGK) coordinates ATP.

The protein belongs to the activator 1 small subunits family. In terms of assembly, heterotetramer of subunits RFC2, RFC3, RFC4 and RFC5 that can form a complex with RFC1. Expressed in roots, leaves, shoot apical meristem (SAM), flag leaves and panicles.

It is found in the nucleus. Its function is as follows. May be involved in DNA replication and thus regulate cell proliferation. The protein is Replication factor C subunit 5 (RFC5) of Oryza sativa subsp. japonica (Rice).